The following is a 517-amino-acid chain: 2-isopropylmalate synthase (517 aa).

In terms of domain architecture, Pyruvate carboxyltransferase spans 5 to 268; the sequence is IIIFDTTLRD…DTRINTQEIH (264 aa). 4 residues coordinate Mn(2+): D14, H202, H204, and N238. The segment at 393–517 is regulatory domain; the sequence is SLDVITSQTI…ADLKSHKISQ (125 aa).

The protein belongs to the alpha-IPM synthase/homocitrate synthase family. LeuA type 1 subfamily. Homodimer. Mn(2+) is required as a cofactor.

Its subcellular location is the cytoplasm. It catalyses the reaction 3-methyl-2-oxobutanoate + acetyl-CoA + H2O = (2S)-2-isopropylmalate + CoA + H(+). Its pathway is amino-acid biosynthesis; L-leucine biosynthesis; L-leucine from 3-methyl-2-oxobutanoate: step 1/4. Catalyzes the condensation of the acetyl group of acetyl-CoA with 3-methyl-2-oxobutanoate (2-ketoisovalerate) to form 3-carboxy-3-hydroxy-4-methylpentanoate (2-isopropylmalate). This Histophilus somni (strain 129Pt) (Haemophilus somnus) protein is 2-isopropylmalate synthase.